Reading from the N-terminus, the 224-residue chain is Deoxyribose-phosphate aldolase (224 aa).

The Proton donor/acceptor role is filled by D93. Residue K159 is the Schiff-base intermediate with acetaldehyde of the active site. The Proton donor/acceptor role is filled by K189.

The protein belongs to the DeoC/FbaB aldolase family. DeoC type 1 subfamily.

The protein resides in the cytoplasm. It catalyses the reaction 2-deoxy-D-ribose 5-phosphate = D-glyceraldehyde 3-phosphate + acetaldehyde. The protein operates within carbohydrate degradation; 2-deoxy-D-ribose 1-phosphate degradation; D-glyceraldehyde 3-phosphate and acetaldehyde from 2-deoxy-alpha-D-ribose 1-phosphate: step 2/2. Catalyzes a reversible aldol reaction between acetaldehyde and D-glyceraldehyde 3-phosphate to generate 2-deoxy-D-ribose 5-phosphate. The protein is Deoxyribose-phosphate aldolase of Mycobacterium bovis (strain ATCC BAA-935 / AF2122/97).